The primary structure comprises 327 residues: Phenylalanine--tRNA ligase alpha subunit (327 aa).

Glu-252 contributes to the Mg(2+) binding site.

This sequence belongs to the class-II aminoacyl-tRNA synthetase family. Phe-tRNA synthetase alpha subunit type 1 subfamily. Tetramer of two alpha and two beta subunits. Mg(2+) is required as a cofactor.

Its subcellular location is the cytoplasm. It carries out the reaction tRNA(Phe) + L-phenylalanine + ATP = L-phenylalanyl-tRNA(Phe) + AMP + diphosphate + H(+). This chain is Phenylalanine--tRNA ligase alpha subunit, found in Escherichia coli O127:H6 (strain E2348/69 / EPEC).